The chain runs to 1163 residues: MLEGRILAVSTQTKAVAGIPGAPKRVSFAKIREPLEVPGLLDLQTESFAWLIGSPEWRERAAARGDVGLVGGLEEVLEELSPIEDFSGSMSLSFSDPRFEEVKASIDECKEKDMTYAAPLFVTAEFINNNTGEIKSQTVFMGDFPMMTDKGTFIINGTERVVVSQLVRSPGVYFDHSIDKGTEKDLHSVRVIPSRGAWLEFDVDKRDTVGVRIDRKRRQPVTVLLKALGWTTEEIAERFGFSEIMMSTLEKDNTAGQDEALLDIYRKLRPGEPPTKESAQTLLENLFFKEKRYDLARVGRYKINKKLGIHVGEPVTGSVLTKEDIVTTIEYLVRLHAGDKTMTAPGGVEVPVEVDDIDHFGNRRLRTVGELIQNQIRVGLSRMERVVRERMTTQDVEAITPQTLINIRPVVAAIKEFFGTSQLSQFMDQNNPLSGLTHKRRLSALGPGGLSRERAGLEVRDVHPSHYGRMCPIETPEGPNIGLIGSLSVYARVNPFGFIETPYRKVVDGRVTDEVVYLTADEEDRHVRAQANSPVGPDGRFLEDRVLCRRGNEEMEYVAATEVDFMDVSPRQMVSVATAMIPFLEHDDANRALMGANMQRQAVPLIRSEAPIVGTGMELRAAVDAGDVVVNEKAGVVEEVSADYVTVMADDGTRKSYRMRKFNRSNQGTCSNQRPIVDEGQRVEAGQVLADGPCTENGEMALGKNLLVAIMPWEGHNYEDAIILSQRLVEQDVLTSIHIEEHEIDARDTKLGAEEITRDIPNVSDEVLADLDERGIVRIGAEVRDGDILVGKVTPKGETELTPEERLLRAIFGEKAREVRDTSLKVPHGESGKVIGIRVFSREDDDDLPPGVNELVRVYVAQKRKIQDGDKLAGRHGNKGVIGKILPTEDMPFLPDGTPVDIILNTHGVPRRMNIGQILETHLGWIGKAGWKVEGNPEWAKDLPEEMWEAPADSNIATPVFDGAREEELTGLLGSTLPNRDGERMVDDNGKAVLFDGRSGEPFPYPVAVGYMYILKLHHLVDDKIHARSTGPYSMITQQPLGGKAQFGGQRFGEMECWAMQAYGAAYTLQELLTIKSDDVVGRVKVYEAIVKGENIPEPGIPESFKVLLKELQSLCLNVEVLSSDGAAIELREGEDEDLERAAANLGINLSRNEAATVDDLAN.

The protein belongs to the RNA polymerase beta chain family. The RNAP catalytic core consists of 2 alpha, 1 beta, 1 beta' and 1 omega subunit. When a sigma factor is associated with the core the holoenzyme is formed, which can initiate transcription.

The enzyme catalyses RNA(n) + a ribonucleoside 5'-triphosphate = RNA(n+1) + diphosphate. In terms of biological role, DNA-dependent RNA polymerase catalyzes the transcription of DNA into RNA using the four ribonucleoside triphosphates as substrates. The sequence is that of DNA-directed RNA polymerase subunit beta 2 from Nocardia farcinica (strain IFM 10152).